Here is an 886-residue protein sequence, read N- to C-terminus: MSATYTNTITQRRKTAKVRQQQQHQWTGSDLSGESNERLHFRSRSTNSMQQHTAISNSPSPLCCNGARALTMLNCCVDVNCHLNAPLRGSVNRHTTPTPTPTATPTPVATPKQASPSPTSDRSRSLSRSPSPSRSRSLSCQKQIDKNSAGAASAEERKTANASSQPFTVNLRIDLFSWTLFLLAFGTRFYKLATPPHIVFDELHYGKYISMYMRNIFFFDQHPPLGKQLIAGLVSLAGYDGNYTFTRIGEPYSPEMPIFWFRFLPAMCGSLLAPAVYNLLLEAKLSRWSSALGGLLVVLDNSLLTQSRFVLMESMLLLATTVGIACLLRFQRSRLGSLEWFFTGTAAAVCLGAAGTVKYVGFLALGLAFYLLCRHLWQLLYDAGLTDRQLWMHAISRLLIFVGIPLAVYLGVFYIHFKTLHRAGPHDSIMTSAFQASLDGGLASITKGQPLAVVHGSQITLRHTHGRTCWLHSHAAVYPVRYPDKRGSSHQQQVTCYSFKDVNNWWLVKRPTKENLVVGDEPDIIRHGEIIQLVHGITSRALNSHDVAAAMTPQCQEVSCYIDYEIKMAGELLWRVEILNRDSEGDIWHAIKSEVRLVHVSTEASLKFSGRQLPEWGFNQHEVVADREKAIHEDAIWNVEEHRYTQTEDHRERERQMLTAEMIPTKRTRISFWAKLLELQSKMLFQTKSVPNHMYSSMPHEWPLMDKGIAYWLDSQSSAQIYLLGNILLWYTATMGILVYAGLLAFYAMRRQRLCFDISEQEWQRFVLAGDTFFMGYVMHYIPYFCVDRTLFLHNYLPAFVFKLLLLCFVVEHLDYLLRRFCTGRGVHLVRLYRLMLILWLVGVLSIFSKFIPFSYGARKMTLNEVRSLRWKDTWDFVLHKNHHLY.

Composition is skewed to polar residues over residues 1 to 10 (MSATYTNTIT) and 18 to 34 (VRQQ…LSGE). Disordered stretches follow at residues 1 to 37 (MSAT…ESNE) and 88 to 161 (RGSV…KTAN). Residues 105–139 (PTPVATPKQASPSPTSDRSRSLSRSPSPSRSRSLS) show a composition bias toward low complexity. Asparagine 161 and asparagine 242 each carry an N-linked (GlcNAc...) asparagine glycan. 4 helical membrane passes run 256-276 (MPIF…APAV), 310-330 (VLME…LLRF), 349-369 (VCLG…GLAF), and 398-418 (LLIF…IHFK). MIR domains follow at residues 450-511 (PLAV…VKRP), 522-579 (PDII…VEIL), and 585-642 (GDIW…VEEH). A run of 3 helical transmembrane segments spans residues 727–747 (ILLW…LAFY), 791–811 (LFLH…CFVV), and 835–855 (LMLI…IPFS).

It belongs to the glycosyltransferase 39 family. Interacts with tw/POMT2. As to expression, at the cellular blastoderm stage, expression accumulates in the ventrally located mesoderm primordium. At germ band extension, mesoderm expression is seen as stripes of strong expression. A very strong signal is also detected in the invaginating gut. As the germ band retracts, mesodermal expression decays and becomes restricted to somatic muscle precursors. After dorsal closure, expression has disappeared from the mesoderm and remains in the endoderm. Some expression is detected in a few cells of the head and the pharyngeal muscles.

The protein resides in the endoplasmic reticulum membrane. It catalyses the reaction a di-trans,poly-cis-dolichyl beta-D-mannosyl phosphate + L-seryl-[protein] = 3-O-(alpha-D-mannosyl)-L-seryl-[protein] + a di-trans,poly-cis-dolichyl phosphate + H(+). It carries out the reaction a di-trans,poly-cis-dolichyl beta-D-mannosyl phosphate + L-threonyl-[protein] = 3-O-(alpha-D-mannosyl)-L-threonyl-[protein] + a di-trans,poly-cis-dolichyl phosphate + H(+). Its pathway is protein modification; protein glycosylation. Rt/POMT1 and tw/POMT2 function as a protein O-mannosyltransferase in association with each other to generate and maintain normal muscle development. The chain is Protein O-mannosyltransferase 1 from Drosophila melanogaster (Fruit fly).